The sequence spans 128 residues: Large ribosomal subunit protein eL22 (128 aa).

Phosphothreonine is present on Thr62. At Ser66 the chain carries Phosphoserine. Lys69 is subject to N6-succinyllysine.

It belongs to the eukaryotic ribosomal protein eL22 family. Component of the large ribosomal subunit.

It localises to the cytoplasm. In terms of biological role, component of the large ribosomal subunit. The ribosome is a large ribonucleoprotein complex responsible for the synthesis of proteins in the cell. This is Large ribosomal subunit protein eL22 (Rpl22) from Rattus norvegicus (Rat).